Consider the following 46-residue polypeptide: TGTGPSLSIVNPLDVLRQRLLLEIARRRMRQTQNMIQANRDFLESI.

Ile46 bears the Isoleucine amide mark.

Its subcellular location is the secreted. Functionally, regulation of fluid secretion. Stimulates primary urine secretion by Malpighian tubules and causes a dose-dependent stimulation of cAMP levels in the tubules. Has a greater effect on the transport of Na(+) then K(+) ions. In vitro, has synergistic effects with the smaller diuretic hormone DH(31) which co-occurs with it. The protein is Diuretic hormone class 1 of Diploptera punctata (Pacific beetle cockroach).